A 448-amino-acid polypeptide reads, in one-letter code: MILGTPKADWLAEFPRLADLIALRPSEWFNPAIAPSAEALADVGLGAADVADASARLQRFAPLIARLFPETAASGGIIESDLVEVATFHDALRQHYAAELPGRLWLKRDSHLPISGSIKARGGIYEVLAHAERLALEHGLVGLDDDYSRLAEADCRAFFARHRIAVGSTGNLGLSIGIIGAALGFQASVHMSADARQWKKDKLRAHGVTVVEYASDYSVAVEQGRREAAGDPYTHFVDDENSRDLFLGYAVAAERLRGQLDAAGIRVDSEHPLFVHLPCGVGGGPGGVAFGLKLAFGDAVHCLFAEPTHSPCMFLGVYTGRHEQVSVQDFGIDNRTAADGLAVGRPSGFVGRAMQRLLDGYYTVDDDELFRLLALLERSQGIRLEPSALAGATGIARVTREPQGYRERMGLTSARLANATHLVWATGGGMVPETEMRAYLERGRSLLD.

K119 carries the N6-(pyridoxal phosphate)lysine modification.

The protein belongs to the serine/threonine dehydratase family. DsdA subfamily. It depends on pyridoxal 5'-phosphate as a cofactor.

The enzyme catalyses D-serine = pyruvate + NH4(+). This Pseudomonas aeruginosa (strain ATCC 15692 / DSM 22644 / CIP 104116 / JCM 14847 / LMG 12228 / 1C / PRS 101 / PAO1) protein is Probable D-serine dehydratase.